The primary structure comprises 493 residues: Glutamyl-tRNA(Gln) amidotransferase subunit A (493 aa).

Residues Lys-79 and Ser-159 each act as charge relay system in the active site. Ser-183 serves as the catalytic Acyl-ester intermediate.

Belongs to the amidase family. GatA subfamily. Heterotrimer of A, B and C subunits.

It carries out the reaction L-glutamyl-tRNA(Gln) + L-glutamine + ATP + H2O = L-glutaminyl-tRNA(Gln) + L-glutamate + ADP + phosphate + H(+). In terms of biological role, allows the formation of correctly charged Gln-tRNA(Gln) through the transamidation of misacylated Glu-tRNA(Gln) in organisms which lack glutaminyl-tRNA synthetase. The reaction takes place in the presence of glutamine and ATP through an activated gamma-phospho-Glu-tRNA(Gln). In Rhizobium johnstonii (strain DSM 114642 / LMG 32736 / 3841) (Rhizobium leguminosarum bv. viciae), this protein is Glutamyl-tRNA(Gln) amidotransferase subunit A.